A 169-amino-acid polypeptide reads, in one-letter code: Disulfide bond formation protein B (169 aa).

At 1–13 (MQALNHFSRIRLS) the chain is on the cytoplasmic side. A helical transmembrane segment spans residues 14-30 (WFLLLLCIIFFEASALT). The Periplasmic portion of the chain corresponds to 31–48 (FQHIMKLPPCVMCIYERV). C40 and C43 are joined by a disulfide. Residues 49–64 (AMMGIGGAAIIGLLNP) form a helical membrane-spanning segment. The Cytoplasmic segment spans residues 65–71 (NNLIIRW). Residues 72-89 (CGFIAWGISAGWGLKLAL) form a helical membrane-spanning segment. Residues 90–144 (EHVDFQLNPSPFSTCDLFVTFPSWAPLNKWAPWMFEAYGDCSKIVWQFLTLTMPQ) lie on the Periplasmic side of the membrane. The cysteines at positions 104 and 130 are disulfide-linked. The chain crosses the membrane as a helical span at residues 145 to 163 (WLVIIFAGNLIALAIFVIA). Residues 164–169 (QFFNKK) lie on the Cytoplasmic side of the membrane.

It belongs to the DsbB family.

It localises to the cell inner membrane. In terms of biological role, required for disulfide bond formation in some periplasmic proteins. Acts by oxidizing the DsbA protein. The chain is Disulfide bond formation protein B from Aliivibrio fischeri (strain ATCC 700601 / ES114) (Vibrio fischeri).